Consider the following 32-residue polypeptide: ATP synthase subunit O, mitochondrial (32 aa).

Belongs to the ATPase delta chain family. F-type ATPases have 2 components, CF(1) - the catalytic core - and CF(0) - the membrane proton channel. CF(1) has five subunits: alpha(3), beta(3), gamma(1), delta(1), epsilon(1). CF(0) has three main subunits: a, b and c.

It localises to the mitochondrion. The protein localises to the mitochondrion inner membrane. In terms of biological role, mitochondrial membrane ATP synthase (F(1)F(0) ATP synthase or Complex V) produces ATP from ADP in the presence of a proton gradient across the membrane which is generated by electron transport complexes of the respiratory chain. F-type ATPases consist of two structural domains, F(1) - containing the extramembraneous catalytic core and F(0) - containing the membrane proton channel, linked together by a central stalk and a peripheral stalk. During catalysis, ATP synthesis in the catalytic domain of F(1) is coupled via a rotary mechanism of the central stalk subunits to proton translocation. Part of the complex F(0) domain and the peripheric stalk, which acts as a stator to hold the catalytic alpha(3)beta(3) subcomplex and subunit a/ATP6 static relative to the rotary elements. In Spinacia oleracea (Spinach), this protein is ATP synthase subunit O, mitochondrial.